A 587-amino-acid chain; its full sequence is Complement component C8 beta chain (587 aa).

The N-terminal stretch at 1 to 31 is a signal peptide; it reads MNHKLKPTVGLGYCLLCAALCLLLLRDVAIA. The propeptide occupies 32–44; sequence GSGEEPSGVREAR. One can recognise a TSP type-1 1 domain in the interval 56–111; it reads DCVQSEWSSWTRCDVCRKKRYRYAKLVQPSQFGGEPCHVQGKEVEPCSPPSRYDCT. 5 cysteine pairs are disulfide-bonded: cysteine 57/cysteine 92, cysteine 68/cysteine 102, cysteine 71/cysteine 110, cysteine 118/cysteine 129, and cysteine 123/cysteine 142. Tryptophan 62 and tryptophan 65 each carry a C-linked (Man) tryptophan glycan. The LDL-receptor class A domain occupies 117–159; that stretch reads LCEGFLCTYTGRCVPIDLRCNGDDDCGDWSAEKGSPKVPKACK. Ca(2+) contacts are provided by leucine 134, asparagine 137, aspartate 139, aspartate 141, and glutamate 148. An MACPF domain is found at 154–500; that stretch reads VPKACKQEAQ…EYLEESSSCR (347 aa). A disulfide bridge links cysteine 158 with cysteine 196. Beta stranded transmembrane passes span 248–255, 258–265, 375–382, and 388–395; these read TTVSIGFA, GVAEFGFN, EQIVLKVG, and VYVTVGLE. 5 cysteine pairs are disulfide-bonded: cysteine 374/cysteine 399, cysteine 499/cysteine 546, cysteine 501/cysteine 517, cysteine 504/cysteine 519, and cysteine 521/cysteine 530. The region spanning 501-531 is the EGF-like domain; the sequence is CAPCRNNGLAVLKGTRCECVCPSGYSGLGCE. In terms of domain architecture, TSP type-1 2 spans 541 to 587; sequence DGSWSCWGSWSPCRGRSKTRSRQCNNPAPSSGGIACRGLQMETTDCF. 2 C-linked (Man) tryptophan glycosylation sites follow: tryptophan 547 and tryptophan 550. Cysteine 553 and cysteine 586 are disulfide-bonded.

This sequence belongs to the complement C6/C7/C8/C9 family. In terms of assembly, heterotrimer of 3 chains: alpha (C8A), beta (C8B) and gamma (C8G); the alpha and gamma chains are disulfide bonded. Component of the membrane attack complex (MAC), composed of complement C5b, C6, C7, C8A, C8B, C8G and multiple copies of the pore-forming subunit C9.

It is found in the secreted. The protein localises to the target cell membrane. In terms of biological role, component of the membrane attack complex (MAC), a multiprotein complex activated by the complement cascade, which inserts into a target cell membrane and forms a pore, leading to target cell membrane rupture and cell lysis. The MAC is initiated by proteolytic cleavage of C5 into complement C5b in response to the classical, alternative, lectin and GZMK complement pathways. The complement pathways consist in a cascade of proteins that leads to phagocytosis and breakdown of pathogens and signaling that strengthens the adaptive immune system. C8B, together with C8A and C8G, inserts into the target membrane, but does not form pores by itself. During MAC assembly, associates with C5b, C6 and C7 to form the C5b8 intermediate complex that inserts into the target membrane and traverses the bilayer increasing membrane rigidity. In Oncorhynchus mykiss (Rainbow trout), this protein is Complement component C8 beta chain (c8b).